A 520-amino-acid polypeptide reads, in one-letter code: Laccase (520 aa).

A signal peptide spans 1 to 21 (MHTFLRSTALVVAGLSARALA). Plastocyanin-like domains lie at 22–148 (SIGP…FVVY) and 160–304 (VDDD…ILRY). A glycan (N-linked (GlcNAc...) asparagine) is linked at Asn-75. Positions 85, 87, 130, and 132 each coordinate Cu cation. 2 disulfides stabilise this stretch: Cys-106–Cys-509 and Cys-138–Cys-227. Asn-352 and Asn-402 each carry an N-linked (GlcNAc...) asparagine glycan. The Plastocyanin-like 3 domain occupies 373 to 496 (TVPVLLQILS…VFAEDIPDVA (124 aa)). Cu cation-binding residues include His-418, His-421, His-423, His-473, Cys-474, His-475, and His-479.

The protein belongs to the multicopper oxidase family. The cofactor is Cu cation.

The protein resides in the secreted. The catalysed reaction is 4 hydroquinone + O2 = 4 benzosemiquinone + 2 H2O. Lignin degradation and detoxification of lignin-derived products. In Phlebia radiata (White-rot fungus), this protein is Laccase (LAC).